A 322-amino-acid polypeptide reads, in one-letter code: Dirigent protein 9 (322 aa).

Residues 1–20 form the signal peptide; it reads MAKALHITIFLFLISSNLLA.

This sequence belongs to the plant dirigent protein family. In terms of assembly, homodimer.

The protein localises to the secreted. It localises to the extracellular space. It is found in the apoplast. Functionally, dirigent proteins impart stereoselectivity on the phenoxy radical-coupling reaction, yielding optically active lignans from two molecules of coniferyl alcohol in the biosynthesis of lignans, flavonolignans, and alkaloids and thus plays a central role in plant secondary metabolism. The polypeptide is Dirigent protein 9 (DIR9) (Arabidopsis thaliana (Mouse-ear cress)).